The primary structure comprises 342 residues: MGSMDDVTAYPRLVGDVGGTNARFALEMAPMRLAHIGVLAGDDYPSLEAAMRAYLAALPPEIAAAGVRHAAIGIANPVLGDQIRMTNRDWAFSTEAMRQSLGFDTFVVLNDFAALAHALPYLGADELEQVGGSTCVADAPRALLGPGTGLGVASLLPTQAGRFIAVAGEGGHVAFAPMNDEEVVIWRFARERFGHVSAERLISGMGLELIYEALGACFDLWQQGPAVRRAADITAIALGEMEDTAGDHARCRYAVDTFCAMLGTVAANLAVTLGARGGVYIGGGIVPRLGAAFANSPFRRRFEDKGRFSGYVAAMPVYVIHAPYPGLIGLCAAMDHAVASGH.

15–20 (GDVGGT) lines the ATP pocket.

Belongs to the bacterial glucokinase family.

Its subcellular location is the cytoplasm. It carries out the reaction D-glucose + ATP = D-glucose 6-phosphate + ADP + H(+). The polypeptide is Glucokinase (Ralstonia nicotianae (strain ATCC BAA-1114 / GMI1000) (Ralstonia solanacearum)).